Consider the following 459-residue polypeptide: GTPase Der (459 aa).

EngA-type G domains lie at 4-169 (PLVA…PEVT) and 179-355 (IAVS…AAHR). GTP-binding positions include 10–17 (GRPNVGKS), 57–61 (DTGGL), 120–123 (NKCE), 185–192 (GRPNVGKS), 232–236 (DTAGI), and 297–300 (NKWD). One can recognise a KH-like domain in the interval 356–441 (KRVPTAVVNE…PIRFLWRGKS (86 aa)).

The protein belongs to the TRAFAC class TrmE-Era-EngA-EngB-Septin-like GTPase superfamily. EngA (Der) GTPase family. As to quaternary structure, associates with the 50S ribosomal subunit.

Functionally, GTPase that plays an essential role in the late steps of ribosome biogenesis. The sequence is that of GTPase Der from Synechococcus sp. (strain JA-2-3B'a(2-13)) (Cyanobacteria bacterium Yellowstone B-Prime).